A 123-amino-acid polypeptide reads, in one-letter code: Protein Wnt-7(I) (123 aa).

Ser-1 is lipidated: O-palmitoleoyl serine; by PORCN. Cysteines 89 and 104 form a disulfide. The N-linked (GlcNAc...) asparagine glycan is linked to Asn-90. Residues 121-123 (CKF) carry the Microbody targeting signal motif.

It belongs to the Wnt family. Post-translationally, palmitoleoylation is required for efficient binding to frizzled receptors. Depalmitoleoylation leads to Wnt signaling pathway inhibition.

It localises to the secreted. It is found in the extracellular space. The protein resides in the extracellular matrix. In terms of biological role, ligand for members of the frizzled family of seven transmembrane receptors. Probable developmental protein. May be a signaling molecule which affects the development of discrete regions of tissues. Is likely to signal over only few cell diameters. The protein is Protein Wnt-7(I) (WNT-7(I)) of Eptatretus stoutii (Pacific hagfish).